A 386-amino-acid polypeptide reads, in one-letter code: 2,3-diketo-5-methylthiopentyl-1-phosphate enolase (386 aa).

Lys-85 functions as the Proton acceptor in the catalytic mechanism. Substrate is bound by residues Lys-131, 157-160 (KDDE), His-248, Gly-316, and 338-339 (GT). The Mg(2+) site is built by Lys-157, Asp-159, and Glu-160. Lys-157 bears the N6-carboxylysine mark.

Belongs to the RuBisCO large chain family. Type IV subfamily. In terms of assembly, homodimer. It depends on Mg(2+) as a cofactor.

The enzyme catalyses 5-methylsulfanyl-2,3-dioxopentyl phosphate = 2-hydroxy-5-methylsulfanyl-3-oxopent-1-enyl phosphate. Its pathway is amino-acid biosynthesis; L-methionine biosynthesis via salvage pathway; L-methionine from S-methyl-5-thio-alpha-D-ribose 1-phosphate: step 3/6. In terms of biological role, catalyzes the enolization of 2,3-diketo-5-methylthiopentyl-1-phosphate (DK-MTP-1-P) into 2-hydroxy-3-keto-5-methylthiopentenyl-1-phosphate (HK-MTPenyl-1-P). This is 2,3-diketo-5-methylthiopentyl-1-phosphate enolase (mtnW) from Microcystis aeruginosa.